Reading from the N-terminus, the 576-residue chain is Quinone-reactive Ni/Fe-hydrogenase large chain (576 aa).

Cys-62, Cys-65, Cys-547, and Cys-550 together coordinate Ni(2+).

It belongs to the [NiFe]/[NiFeSe] hydrogenase large subunit family. As to quaternary structure, heterodimer of a large and a small subunit. It depends on Ni(2+) as a cofactor.

The protein resides in the cell membrane. It carries out the reaction H2 + a menaquinone = a menaquinol. In terms of biological role, this enzyme recycles the H(2) produced by nitrogenase to increase the production of ATP and to protect nitrogenase against inhibition or damage by O(2) under carbon- or phosphate-limited conditions. This Wolinella succinogenes (strain ATCC 29543 / DSM 1740 / CCUG 13145 / JCM 31913 / LMG 7466 / NCTC 11488 / FDC 602W) (Vibrio succinogenes) protein is Quinone-reactive Ni/Fe-hydrogenase large chain (hydB).